A 90-amino-acid chain; its full sequence is Putative regulatory protein cce_4590 (90 aa).

The protein belongs to the RemA family.

The polypeptide is Putative regulatory protein cce_4590 (Crocosphaera subtropica (strain ATCC 51142 / BH68) (Cyanothece sp. (strain ATCC 51142))).